The primary structure comprises 268 residues: Putative hydro-lyase A1S_1268 (268 aa).

This sequence belongs to the D-glutamate cyclase family.

This Acinetobacter baumannii (strain ATCC 17978 / DSM 105126 / CIP 53.77 / LMG 1025 / NCDC KC755 / 5377) protein is Putative hydro-lyase A1S_1268.